The sequence spans 310 residues: tRNA dimethylallyltransferase (310 aa).

13-20 (GPTASGKT) provides a ligand contact to ATP. Residue 15–20 (TASGKT) participates in substrate binding. Interaction with substrate tRNA stretches follow at residues 38–41 (DSAL), 162–166 (QRLSR), 243–248 (RCVGYR), and 276–283 (KRQITWLR).

The protein belongs to the IPP transferase family. As to quaternary structure, monomer. It depends on Mg(2+) as a cofactor.

It catalyses the reaction adenosine(37) in tRNA + dimethylallyl diphosphate = N(6)-dimethylallyladenosine(37) in tRNA + diphosphate. Its function is as follows. Catalyzes the transfer of a dimethylallyl group onto the adenine at position 37 in tRNAs that read codons beginning with uridine, leading to the formation of N6-(dimethylallyl)adenosine (i(6)A). In Vibrio parahaemolyticus serotype O3:K6 (strain RIMD 2210633), this protein is tRNA dimethylallyltransferase.